The primary structure comprises 654 residues: Polyvinylalcohol dehydrogenase (654 aa).

Positions 1–32 are cleaved as a signal peptide; sequence MGSHAWGGAVFSAATLIAFGSVVHASGTVAET. A Cytochrome c domain is found at 42–159; the sequence is ADQLDGETLY…AANQWNGWST (118 aa). Cysteine 55, cysteine 58, and histidine 59 together coordinate heme c.

This sequence belongs to the bacterial PQQ dehydrogenase family. In terms of assembly, monomer. It depends on pyrroloquinoline quinone as a cofactor.

It localises to the periplasm. It catalyses the reaction a polyvinyl alcohol + 2n Fe(III)-[cytochrome c] = an oxidized polyvinyl alcohol + 2n Fe(II)-[cytochrome c] + 2n H(+). In terms of biological role, catalyzes the oxidation of polyvinyl alcohol (PVA) in the polyvinyl alcohol degradation pathway. The polypeptide is Polyvinylalcohol dehydrogenase (pvadh) (Sphingopyxis sp. (strain 113P3)).